The chain runs to 206 residues: Ribosomal RNA small subunit methyltransferase G (206 aa).

S-adenosyl-L-methionine-binding positions include Gly-74, Leu-79, 125 to 126 (VE), and Arg-140.

The protein belongs to the methyltransferase superfamily. RNA methyltransferase RsmG family.

It is found in the cytoplasm. It catalyses the reaction guanosine(527) in 16S rRNA + S-adenosyl-L-methionine = N(7)-methylguanosine(527) in 16S rRNA + S-adenosyl-L-homocysteine. Functionally, specifically methylates the N7 position of guanine in position 527 of 16S rRNA. The polypeptide is Ribosomal RNA small subunit methyltransferase G (Shewanella oneidensis (strain ATCC 700550 / JCM 31522 / CIP 106686 / LMG 19005 / NCIMB 14063 / MR-1)).